We begin with the raw amino-acid sequence, 88 residues long: Apolipoprotein C-I (88 aa).

The first 26 residues, methionine 1–alanine 26, serve as a signal peptide directing secretion.

This sequence belongs to the apolipoprotein C1 family.

It is found in the secreted. Its function is as follows. Inhibitor of lipoprotein binding to the low density lipoprotein (LDL) receptor, LDL receptor-related protein, and very low density lipoprotein (VLDL) receptor. Associates with high density lipoproteins (HDL) and the triacylglycerol-rich lipoproteins in the plasma and makes up about 10% of the protein of the VLDL and 2% of that of HDL. Appears to interfere directly with fatty acid uptake and is also the major plasma inhibitor of cholesteryl ester transfer protein (CETP). Binds free fatty acids and reduces their intracellular esterification. Modulates the interaction of APOE with beta-migrating VLDL and inhibits binding of beta-VLDL to the LDL receptor-related protein. This Arctocephalus gazella (Antarctic fur seal) protein is Apolipoprotein C-I (APOC1).